Reading from the N-terminus, the 400-residue chain is DNA polymerase IV (400 aa).

The 183-residue stretch at 5–187 folds into the UmuC domain; it reads IFLVDMNAFF…LPVEFMNGIG (183 aa). Residues Asp-9 and Asp-105 each contribute to the Mg(2+) site. Residue Glu-106 is part of the active site.

The protein belongs to the DNA polymerase type-Y family. As to quaternary structure, monomer. It depends on Mg(2+) as a cofactor.

The protein resides in the cytoplasm. The catalysed reaction is DNA(n) + a 2'-deoxyribonucleoside 5'-triphosphate = DNA(n+1) + diphosphate. Functionally, poorly processive, error-prone DNA polymerase involved in untargeted mutagenesis. Copies undamaged DNA at stalled replication forks, which arise in vivo from mismatched or misaligned primer ends. These misaligned primers can be extended by PolIV. Exhibits no 3'-5' exonuclease (proofreading) activity. May be involved in translesional synthesis, in conjunction with the beta clamp from PolIII. In Clostridium kluyveri (strain ATCC 8527 / DSM 555 / NBRC 12016 / NCIMB 10680 / K1), this protein is DNA polymerase IV.